A 240-amino-acid polypeptide reads, in one-letter code: Intestine-specific homeobox (240 aa).

The interval 36–82 (PTERRSLPRPQSICKEDSRQTTIPGSKLERPPQDQPQEEKKNKRRVR) is disordered. The segment covering 62 to 76 (KLERPPQDQPQEEKK) has biased composition (basic and acidic residues). A DNA-binding region (homeobox) is located at residues 78-137 (KRRVRTTFTTEQLQELEKLFHFTHYPDIHVRSQLASRINLPEARVQIWFQNQRAKWRKQE).

Expressed in intestinal epithelial cells from the duodenum to the proximal colon.

It is found in the nucleus. In terms of biological role, transcription factor that regulates gene expression in intestine. May participate in vitamin A metabolism most likely by regulating BCO1 expression in the intestine. This Mus musculus (Mouse) protein is Intestine-specific homeobox (Isx).